The primary structure comprises 143 residues: Large ribosomal subunit protein uL11 (143 aa).

Belongs to the universal ribosomal protein uL11 family. Part of the ribosomal stalk of the 50S ribosomal subunit. Interacts with L10 and the large rRNA to form the base of the stalk. L10 forms an elongated spine to which L12 dimers bind in a sequential fashion forming a multimeric L10(L12)X complex. In terms of processing, one or more lysine residues are methylated.

Its function is as follows. Forms part of the ribosomal stalk which helps the ribosome interact with GTP-bound translation factors. The chain is Large ribosomal subunit protein uL11 from Bifidobacterium adolescentis (strain ATCC 15703 / DSM 20083 / NCTC 11814 / E194a).